The following is a 358-amino-acid chain: Polyadenylate-binding protein-interacting protein 11 (358 aa).

Low complexity predominate over residues 1 to 19 (MAVVETGAAATAADAGGVV). Positions 1–45 (MAVVETGAAATAADAGGVVIQPPPSSPPSSMTSQDSGVSSDDQNH) are disordered. Polar residues predominate over residues 31 to 41 (MTSQDSGVSSD). The PAM2-like motif lies at 92–102 (KLNPMAEEFVP). The interval 136–164 (GGYGNENGGFRRKKSFGQGKRRMNARTSM) is disordered. Residues 145-159 (FRRKKSFGQGKRRMN) show a composition bias toward basic residues. The Bipartite nuclear localization signal signature appears at 146-157 (RRKKSFGQGKRR). RRM domains are found at residues 173-248 (RTVY…PSKT) and 270-346 (RTIY…PSKT).

As to expression, expressed in cauline leaves, stems, immature siliques and primary inflorescences.

It localises to the nucleus. In Arabidopsis thaliana (Mouse-ear cress), this protein is Polyadenylate-binding protein-interacting protein 11 (CID11).